A 1211-amino-acid polypeptide reads, in one-letter code: Endoplasmic reticulum transmembrane helix translocase (1211 aa).

At 1 to 23 (MGSKALITSPDISSGQLYIKLPT) the chain is on the cytoplasmic side. The helical transmembrane segment at 24-44 (FFHLYVWPFALFVYPYIGYVY) threads the bilayer. Residues 45 to 54 (QNKLYSEEVR) lie on the Lumenal side of the membrane. The chain crosses the membrane as a helical span at residues 55–75 (YLTYIAVGTIHALFWLAGEWN). Residues 76–191 (TKVYCLMTCR…FDIPIPTFGT (116 aa)) lie on the Cytoplasmic side of the membrane. The tract at residues 155–185 (TIGTLKKSTGLTNIQSEIFLYRYGKNCFDIP) is A-domain; part 1. Residues 192 to 212 (LFKEHAVAPFFVFQIFCCVLW) form a helical membrane-spanning segment. The Lumenal portion of the chain corresponds to 213-216 (CLDD). Residues 217-237 (YWYFSLFSMFMIIALECSVVW) form a helical membrane-spanning segment. Over 238 to 397 (QRQRTLTEFR…EKVTANNRES (160 aa)) the chain is Cytoplasmic. The A-domain; part 2 stretch occupies residues 250–388 (SIKPYEIQVY…LVRTMVFSSE (139 aa)). The chain crosses the membrane as a helical span at residues 398–418 (LYFILFLLVFAIAASGYVWHV). Topologically, residues 419 to 1057 (GSKTERSRYK…KERPQAGIFN (639 aa)) are lumenal. The interval 464–493 (YIYCTEPFRIPLSGHLDICCFDKTGTLTEE) is P-domain; part 1. Catalysis depends on Asp-485, which acts as the 4-aspartylphosphate intermediate. Asp-485 and Thr-487 together coordinate Mg(2+). ATP-binding positions include 485–487 (DKT), Phe-587, Arg-644, Asp-710, and 824–828 (DGTND). The interval 495–685 (MVVQGIAGVN…FAGFLIFTSP (191 aa)) is N-domain. The segment at 688–845 (EDARQTVQML…HVGVALLNAS (158 aa)) is P-domain; part 2. Asp-824 provides a ligand contact to Mg(2+). The segment at 846–955 (EEDMLEMQER…NASDDEAPKL (110 aa)) is arm-like. A P-domain; part 3 region spans residues 956-971 (KLGDASVAAPFTSKLA). A helical transmembrane segment spans residues 1058 to 1078 (TYIIGSVLGQFAIHIVTLIYI). The Cytoplasmic segment spans residues 1079–1100 (TRVVYLYEDPLEKVDLEETFKP). A helical membrane pass occupies residues 1101 to 1121 (SLLNTAIYLLQLIQQVSTFAI). At 1122 to 1136 (NYQGRPFREALSENK) the chain is on the lumenal side. The chain crosses the membrane as a helical span at residues 1137 to 1157 (GMYYGLLGIAFVAIAGVTEFS). Over 1158 to 1174 (PELNAKLQLVKMAYNFQ) the chain is Cytoplasmic. The chain crosses the membrane as a helical span at residues 1175–1195 (IQLLATMVVDYAACWIIEELM). Topologically, residues 1196-1211 (KKYFRDNKPKEIVLRN) are lumenal.

It belongs to the cation transport ATPase (P-type) (TC 3.A.3) family. Type V subfamily. It depends on Mg(2+) as a cofactor.

It is found in the endoplasmic reticulum membrane. The catalysed reaction is [protein]-with a C-terminal TM segment(out) + ATP + H2O = [protein]-with a C-terminal TM segment(in) + ADP + phosphate + H(+). Its function is as follows. Endoplasmic reticulum translocase required to remove mitochondrial transmembrane proteins mistargeted to the endoplasmic reticulum. Acts as a dislocase that mediates the ATP-dependent extraction of mislocalized mitochondrial transmembrane proteins from the endoplasmic reticulum membrane. Specifically binds mitochondrial tail-anchored transmembrane proteins: has an atypically large substrate-binding pocket that recognizes and binds moderately hydrophobic transmembranes with short hydrophilic lumenal domains. Involved in controlling nuclear calcium ion levels. Required for cytokinesis and stabilizing microtubules. Required for assembly of the forespore membrane. Involved in calcium transport to the endoplasmic reticulum. The sequence is that of Endoplasmic reticulum transmembrane helix translocase from Schizosaccharomyces pombe (strain 972 / ATCC 24843) (Fission yeast).